The primary structure comprises 312 residues: Coproporphyrin III ferrochelatase (312 aa).

Fe-coproporphyrin III is bound by residues Y13, R30, 46-47 (RY), S54, and Y125. 2 residues coordinate Fe(2+): H182 and E263.

The protein belongs to the ferrochelatase family.

It localises to the cytoplasm. The catalysed reaction is Fe-coproporphyrin III + 2 H(+) = coproporphyrin III + Fe(2+). It functions in the pathway porphyrin-containing compound metabolism; protoheme biosynthesis. Its function is as follows. Involved in coproporphyrin-dependent heme b biosynthesis. Catalyzes the insertion of ferrous iron into coproporphyrin III to form Fe-coproporphyrin III. The sequence is that of Coproporphyrin III ferrochelatase from Oceanobacillus iheyensis (strain DSM 14371 / CIP 107618 / JCM 11309 / KCTC 3954 / HTE831).